The chain runs to 603 residues: NADH-ubiquinone oxidoreductase chain 5 (603 aa).

The next 15 membrane-spanning stretches (helical) occupy residues 38–58 (SIVA…MCLD), 87–107 (MMFI…SLWY), 122–142 (LIFL…QLFI), 144–160 (WEGV…WWYA), 171–191 (AILY…WFIL), 211–233 (TPLL…HPWL), 241–261 (TPVS…FLLI), 272–292 (LIQT…AVCA), 301–320 (IVAF…IGIN), 325–347 (AFLH…GSII), 370–390 (STSL…TGFY), 407–429 (WALS…MILL), 458–478 (AAGS…ASPF), 482–502 (IPLY…LTAL), and 582–602 (GMIK…LLLI).

Belongs to the complex I subunit 5 family. Core subunit of respiratory chain NADH dehydrogenase (Complex I) which is composed of 45 different subunits.

The protein resides in the mitochondrion inner membrane. It catalyses the reaction a ubiquinone + NADH + 5 H(+)(in) = a ubiquinol + NAD(+) + 4 H(+)(out). In terms of biological role, core subunit of the mitochondrial membrane respiratory chain NADH dehydrogenase (Complex I) which catalyzes electron transfer from NADH through the respiratory chain, using ubiquinone as an electron acceptor. Essential for the catalytic activity and assembly of complex I. This chain is NADH-ubiquinone oxidoreductase chain 5 (MT-ND5), found in Homo sapiens (Human).